The following is a 479-amino-acid chain: Glutamyl-tRNA(Gln) amidotransferase subunit A (479 aa).

Active-site charge relay system residues include Lys-74 and Ser-149. Residue Ser-173 is the Acyl-ester intermediate of the active site.

Belongs to the amidase family. GatA subfamily. As to quaternary structure, heterotrimer of A, B and C subunits.

The enzyme catalyses L-glutamyl-tRNA(Gln) + L-glutamine + ATP + H2O = L-glutaminyl-tRNA(Gln) + L-glutamate + ADP + phosphate + H(+). Allows the formation of correctly charged Gln-tRNA(Gln) through the transamidation of misacylated Glu-tRNA(Gln) in organisms which lack glutaminyl-tRNA synthetase. The reaction takes place in the presence of glutamine and ATP through an activated gamma-phospho-Glu-tRNA(Gln). The polypeptide is Glutamyl-tRNA(Gln) amidotransferase subunit A (Cenarchaeum symbiosum (strain A)).